The sequence spans 327 residues: Phenylalanine--tRNA ligase alpha subunit (327 aa).

Glutamate 252 is a Mg(2+) binding site.

The protein belongs to the class-II aminoacyl-tRNA synthetase family. Phe-tRNA synthetase alpha subunit type 1 subfamily. In terms of assembly, tetramer of two alpha and two beta subunits. Mg(2+) serves as cofactor.

The protein resides in the cytoplasm. The catalysed reaction is tRNA(Phe) + L-phenylalanine + ATP = L-phenylalanyl-tRNA(Phe) + AMP + diphosphate + H(+). This is Phenylalanine--tRNA ligase alpha subunit from Shewanella baltica (strain OS185).